A 142-amino-acid chain; its full sequence is Hemoglobin subunit alpha-1 (142 aa).

Residues 2 to 142 enclose the Globin domain; the sequence is KLSADDKHNV…VGYVLASKYR (141 aa). Residue His59 participates in O2 binding. His88 is a binding site for heme b.

This sequence belongs to the globin family. Major hemoglobin is a heterotetramer of two alpha-1 chains and two beta-1 chains. In terms of tissue distribution, red blood cells.

In terms of biological role, involved in oxygen transport from the lung to the various peripheral tissues. The chain is Hemoglobin subunit alpha-1 from Triturus cristatus (Great crested newt).